A 354-amino-acid chain; its full sequence is Dihydroorotate dehydrogenase (quinone) (354 aa).

FMN contacts are provided by residues alanine 70–lysine 74 and threonine 94. Lysine 74 is a substrate binding site. Residue asparagine 119–phenylalanine 123 coordinates substrate. Residues asparagine 148 and asparagine 181 each coordinate FMN. Asparagine 181 serves as a coordination point for substrate. The active-site Nucleophile is the serine 184. Residue asparagine 186 participates in substrate binding. Lysine 217 and threonine 245 together coordinate FMN. Residue asparagine 246–threonine 247 coordinates substrate. FMN contacts are provided by residues glycine 265, glycine 294, and tyrosine 315–serine 316.

It belongs to the dihydroorotate dehydrogenase family. Type 2 subfamily. As to quaternary structure, monomer. The cofactor is FMN.

The protein localises to the cell membrane. The enzyme catalyses (S)-dihydroorotate + a quinone = orotate + a quinol. It functions in the pathway pyrimidine metabolism; UMP biosynthesis via de novo pathway; orotate from (S)-dihydroorotate (quinone route): step 1/1. Its function is as follows. Catalyzes the conversion of dihydroorotate to orotate with quinone as electron acceptor. This is Dihydroorotate dehydrogenase (quinone) from Sulfurovum sp. (strain NBC37-1).